Consider the following 225-residue polypeptide: Rho GDP-dissociation inhibitor 3 (225 aa).

The protein belongs to the Rho GDI family. In terms of tissue distribution, primarily expressed in pancreas and brain.

Its subcellular location is the cytoplasm. Functionally, inhibits GDP/GTP exchange reaction of RhoB. Interacts specifically with the GDP- and GTP-bound forms of post-translationally processed Rhob and Rhog proteins, both of which show a growth-regulated expression in mammalian cells. Stimulates the release of the GDP-bound but not the GTP-bound RhoB protein. Also inhibits the GDP/GTP exchange of RhoB but shows less ability to inhibit the dissociation of prebound GTP. The protein is Rho GDP-dissociation inhibitor 3 (ARHGDIG) of Homo sapiens (Human).